The primary structure comprises 330 residues: Phosphate acyltransferase (330 aa).

It belongs to the PlsX family. In terms of assembly, homodimer. Probably interacts with PlsY.

It localises to the cytoplasm. The catalysed reaction is a fatty acyl-[ACP] + phosphate = an acyl phosphate + holo-[ACP]. It participates in lipid metabolism; phospholipid metabolism. Catalyzes the reversible formation of acyl-phosphate (acyl-PO(4)) from acyl-[acyl-carrier-protein] (acyl-ACP). This enzyme utilizes acyl-ACP as fatty acyl donor, but not acyl-CoA. The protein is Phosphate acyltransferase of Lactobacillus delbrueckii subsp. bulgaricus (strain ATCC 11842 / DSM 20081 / BCRC 10696 / JCM 1002 / NBRC 13953 / NCIMB 11778 / NCTC 12712 / WDCM 00102 / Lb 14).